Reading from the N-terminus, the 406-residue chain is Coenzyme A biosynthesis bifunctional protein CoaBC (406 aa).

The tract at residues 2 to 190 is phosphopantothenoylcysteine decarboxylase; it reads SLAGKKIVLG…SPVNDLKHLN (189 aa). Cysteine 158 serves as the catalytic Proton donor. The tract at residues 191–406 is phosphopantothenate--cysteine ligase; sequence IMITAGPTRE…VTRYDEKNRR (216 aa). CTP is bound by residues 273 to 275, aspartate 279, lysine 289, 308 to 311, phenylalanine 327, lysine 341, and lysine 345; these read GCA and PDIV.

The protein in the N-terminal section; belongs to the HFCD (homo-oligomeric flavin containing Cys decarboxylase) superfamily. It in the C-terminal section; belongs to the PPC synthetase family. It depends on Mg(2+) as a cofactor. FMN is required as a cofactor.

The enzyme catalyses N-[(R)-4-phosphopantothenoyl]-L-cysteine + H(+) = (R)-4'-phosphopantetheine + CO2. It carries out the reaction (R)-4'-phosphopantothenate + L-cysteine + CTP = N-[(R)-4-phosphopantothenoyl]-L-cysteine + CMP + diphosphate + H(+). Its pathway is cofactor biosynthesis; coenzyme A biosynthesis; CoA from (R)-pantothenate: step 2/5. It participates in cofactor biosynthesis; coenzyme A biosynthesis; CoA from (R)-pantothenate: step 3/5. In terms of biological role, catalyzes two sequential steps in the biosynthesis of coenzyme A. In the first step cysteine is conjugated to 4'-phosphopantothenate to form 4-phosphopantothenoylcysteine. In the second step the latter compound is decarboxylated to form 4'-phosphopantotheine. The sequence is that of Coenzyme A biosynthesis bifunctional protein CoaBC from Escherichia coli O6:H1 (strain CFT073 / ATCC 700928 / UPEC).